Here is a 59-residue protein sequence, read N- to C-terminus: Temporin-CDYe (59 aa).

The signal sequence occupies residues 1-22 (MFTLKKSMLLLLFLGTISLTLC). A propeptide spanning residues 23-42 (EEERDANEEEENGGEVKVEE) is cleaved from the precursor.

It belongs to the frog skin active peptide (FSAP) family. Temporin subfamily. In terms of tissue distribution, expressed by the skin glands.

Its subcellular location is the secreted. Antimicrobial peptide. The sequence is that of Temporin-CDYe from Rana dybowskii (Dybovsky's frog).